A 575-amino-acid chain; its full sequence is V-type ATP synthase alpha chain (575 aa).

An ATP-binding site is contributed by 238 to 245; sequence GPFGAGKT.

Belongs to the ATPase alpha/beta chains family.

The catalysed reaction is ATP + H2O + 4 H(+)(in) = ADP + phosphate + 5 H(+)(out). In terms of biological role, produces ATP from ADP in the presence of a proton gradient across the membrane. The V-type alpha chain is a catalytic subunit. This is V-type ATP synthase alpha chain (atpA) from Borreliella burgdorferi (strain ATCC 35210 / DSM 4680 / CIP 102532 / B31) (Borrelia burgdorferi).